Here is a 132-residue protein sequence, read N- to C-terminus: Large ribosomal subunit protein bL17 (132 aa).

It belongs to the bacterial ribosomal protein bL17 family. In terms of assembly, part of the 50S ribosomal subunit. Contacts protein L32.

The chain is Large ribosomal subunit protein bL17 from Shewanella woodyi (strain ATCC 51908 / MS32).